Reading from the N-terminus, the 513-residue chain is ATP synthase subunit alpha (513 aa).

169–176 provides a ligand contact to ATP; it reads GDRQTGKT.

The protein belongs to the ATPase alpha/beta chains family. In terms of assembly, F-type ATPases have 2 components, CF(1) - the catalytic core - and CF(0) - the membrane proton channel. CF(1) has five subunits: alpha(3), beta(3), gamma(1), delta(1), epsilon(1). CF(0) has three main subunits: a(1), b(2) and c(9-12). The alpha and beta chains form an alternating ring which encloses part of the gamma chain. CF(1) is attached to CF(0) by a central stalk formed by the gamma and epsilon chains, while a peripheral stalk is formed by the delta and b chains.

The protein localises to the cell inner membrane. The catalysed reaction is ATP + H2O + 4 H(+)(in) = ADP + phosphate + 5 H(+)(out). Functionally, produces ATP from ADP in the presence of a proton gradient across the membrane. The alpha chain is a regulatory subunit. The chain is ATP synthase subunit alpha from Bordetella bronchiseptica (strain ATCC BAA-588 / NCTC 13252 / RB50) (Alcaligenes bronchisepticus).